Consider the following 584-residue polypeptide: 2-succinyl-5-enolpyruvyl-6-hydroxy-3-cyclohexene-1-carboxylate synthase (584 aa).

It belongs to the TPP enzyme family. MenD subfamily. As to quaternary structure, homodimer. Requires Mg(2+) as cofactor. It depends on Mn(2+) as a cofactor. The cofactor is thiamine diphosphate.

The catalysed reaction is isochorismate + 2-oxoglutarate + H(+) = 5-enolpyruvoyl-6-hydroxy-2-succinyl-cyclohex-3-ene-1-carboxylate + CO2. It participates in quinol/quinone metabolism; 1,4-dihydroxy-2-naphthoate biosynthesis; 1,4-dihydroxy-2-naphthoate from chorismate: step 2/7. Its pathway is quinol/quinone metabolism; menaquinone biosynthesis. Catalyzes the thiamine diphosphate-dependent decarboxylation of 2-oxoglutarate and the subsequent addition of the resulting succinic semialdehyde-thiamine pyrophosphate anion to isochorismate to yield 2-succinyl-5-enolpyruvyl-6-hydroxy-3-cyclohexene-1-carboxylate (SEPHCHC). The sequence is that of 2-succinyl-5-enolpyruvyl-6-hydroxy-3-cyclohexene-1-carboxylate synthase from Bacillus cereus (strain ATCC 14579 / DSM 31 / CCUG 7414 / JCM 2152 / NBRC 15305 / NCIMB 9373 / NCTC 2599 / NRRL B-3711).